The following is a 708-amino-acid chain: Polyribonucleotide nucleotidyltransferase (708 aa).

Asp-486 and Asp-492 together coordinate Mg(2+). In terms of domain architecture, KH spans 553-612 (PRIIKFKINPEKIRDVIGKGGAVIRALTEETGTTIDISDDGSVTIACVSSEGGEQARKRI). An S1 motif domain is found at 622–690 (GRIYEGTVLK…EKGRLRLSMK (69 aa)).

The protein belongs to the polyribonucleotide nucleotidyltransferase family. Mg(2+) serves as cofactor.

It localises to the cytoplasm. It catalyses the reaction RNA(n+1) + phosphate = RNA(n) + a ribonucleoside 5'-diphosphate. Functionally, involved in mRNA degradation. Catalyzes the phosphorolysis of single-stranded polyribonucleotides processively in the 3'- to 5'-direction. The protein is Polyribonucleotide nucleotidyltransferase of Nitrosomonas europaea (strain ATCC 19718 / CIP 103999 / KCTC 2705 / NBRC 14298).